We begin with the raw amino-acid sequence, 329 residues long: Tyrosine recombinase XerC 1 (329 aa).

A Core-binding (CB) domain is found at 14-101; that stretch reads APPHPQIGAY…AWRGWYQWLA (88 aa). In terms of domain architecture, Tyr recombinase spans 123-320; sequence RLPKALSVEQ…DFQHLAKIYD (198 aa). Active-site residues include R163, K198, H272, R275, and H298. Catalysis depends on Y307, which acts as the O-(3'-phospho-DNA)-tyrosine intermediate.

The protein belongs to the 'phage' integrase family. XerC subfamily. As to quaternary structure, forms a cyclic heterotetrameric complex composed of two molecules of XerC and two molecules of XerD.

The protein resides in the cytoplasm. Site-specific tyrosine recombinase, which acts by catalyzing the cutting and rejoining of the recombining DNA molecules. The XerC-XerD complex is essential to convert dimers of the bacterial chromosome into monomers to permit their segregation at cell division. It also contributes to the segregational stability of plasmids. The protein is Tyrosine recombinase XerC 1 (xerC1) of Ralstonia nicotianae (strain ATCC BAA-1114 / GMI1000) (Ralstonia solanacearum).